The following is a 422-amino-acid chain: 2-oxoglutarate and iron-dependent oxygenase JMJD4 (422 aa).

The region spanning 139-298 (QRNFPEHNIY…IMWQFLQDEL (160 aa)) is the JmjC domain. Fe cation is bound by residues His-186, Asp-188, and His-266.

This sequence belongs to the JMJD6 family. Fe(2+) serves as cofactor.

Its subcellular location is the cytoplasm. It catalyses the reaction L-lysyl-[protein] + 2-oxoglutarate + O2 = 4-hydroxy-L-lysyl-[protein] + succinate + CO2. Functionally, catalyzes the 2-oxoglutarate and iron-dependent C4-lysyl hydroxylation of ETF1 at 'Lys-63' thereby promoting the translational termination efficiency of ETF1. The protein is 2-oxoglutarate and iron-dependent oxygenase JMJD4 (jmjd4) of Danio rerio (Zebrafish).